A 269-amino-acid chain; its full sequence is Phosphatidylglycerol--prolipoprotein diacylglyceryl transferase (269 aa).

The next 7 helical transmembrane spans lie at 10-30 (VALA…LIGI), 56-76 (MVFW…VLFY), 92-112 (WKGG…AWWF), 120-140 (FFEL…AGRI), 174-194 (PSQL…LWLF), 202-222 (MAVS…VEFV), and 237-257 (LTMG…LIWL). Arg139 serves as a coordination point for a 1,2-diacyl-sn-glycero-3-phospho-(1'-sn-glycerol).

The protein belongs to the Lgt family.

The protein localises to the cell inner membrane. The enzyme catalyses L-cysteinyl-[prolipoprotein] + a 1,2-diacyl-sn-glycero-3-phospho-(1'-sn-glycerol) = an S-1,2-diacyl-sn-glyceryl-L-cysteinyl-[prolipoprotein] + sn-glycerol 1-phosphate + H(+). Its pathway is protein modification; lipoprotein biosynthesis (diacylglyceryl transfer). In terms of biological role, catalyzes the transfer of the diacylglyceryl group from phosphatidylglycerol to the sulfhydryl group of the N-terminal cysteine of a prolipoprotein, the first step in the formation of mature lipoproteins. The polypeptide is Phosphatidylglycerol--prolipoprotein diacylglyceryl transferase (Pseudomonas fluorescens (strain ATCC BAA-477 / NRRL B-23932 / Pf-5)).